The chain runs to 126 residues: Aspartate 1-decarboxylase (126 aa).

Ser-25 functions as the Schiff-base intermediate with substrate; via pyruvic acid in the catalytic mechanism. Ser-25 is subject to Pyruvic acid (Ser). Residue Thr-57 coordinates substrate. Tyr-58 acts as the Proton donor in catalysis. 73-75 (GAA) is a substrate binding site.

Belongs to the PanD family. As to quaternary structure, heterooctamer of four alpha and four beta subunits. It depends on pyruvate as a cofactor. Is synthesized initially as an inactive proenzyme, which is activated by self-cleavage at a specific serine bond to produce a beta-subunit with a hydroxyl group at its C-terminus and an alpha-subunit with a pyruvoyl group at its N-terminus.

It is found in the cytoplasm. The enzyme catalyses L-aspartate + H(+) = beta-alanine + CO2. Its pathway is cofactor biosynthesis; (R)-pantothenate biosynthesis; beta-alanine from L-aspartate: step 1/1. In terms of biological role, catalyzes the pyruvoyl-dependent decarboxylation of aspartate to produce beta-alanine. The sequence is that of Aspartate 1-decarboxylase from Sodalis glossinidius (strain morsitans).